A 309-amino-acid chain; its full sequence is Serine/threonine-protein phosphatase 2A catalytic subunit beta isoform (309 aa).

Asp-57, His-59, Asp-85, and Asn-117 together coordinate Mn(2+). Residue His-118 is the Proton donor of the active site. 2 residues coordinate Mn(2+): His-167 and His-241. The residue at position 307 (Tyr-307) is a Phosphotyrosine. Leucine methyl ester is present on Leu-309.

This sequence belongs to the PPP phosphatase family. PP-1 subfamily. As to quaternary structure, found in a complex with at least ARL2, PPP2CB, PPP2R1A, PPP2R2A, PPP2R5E and TBCD. Interacts with TBCD. PP2A consists of a common heterodimeric core enzyme (composed of a 36 kDa catalytic subunit (subunit C) and a 65 kDa constant regulatory subunit (PR65) (subunit A)) that associates with a variety of regulatory subunits. Proteins that associate with the core dimer include three families of regulatory subunits B (the R2/B/PR55/B55, R3/B''/PR72/PR130/PR59 and R5/B'/B56 families), the 48 kDa variable regulatory subunit, viral proteins, and cell signaling molecules. Binds PPME1. May indirectly interact with SGO1, most probably through regulatory B56 subunits. Interacts with CTTNBP2NL. Interacts with PTPA. Part of the core of STRIPAK complexes composed of PP2A catalytic and scaffolding subunits, the striatins (PP2A regulatory subunits), the striatin-associated proteins MOB4, STRIP1 and STRIP2, PDCD10 and members of the STE20 kinases, such as STK24 and STK26. The cofactor is Mn(2+). In terms of processing, reversibly methyl esterified on Leu-309 by leucine carboxyl methyltransferase 1 (Lcmt1) and protein phosphatase methylesterase 1 (PPME1). Carboxyl methylation influences the affinity of the catalytic subunit for the different regulatory subunits, thereby modulating the PP2A holoenzyme's substrate specificity, enzyme activity and cellular localization. Post-translationally, phosphorylation of either threonine (by autophosphorylation-activated protein kinase) or tyrosine results in inactivation of the phosphatase. Auto-dephosphorylation has been suggested as a mechanism for reactivation. May be monoubiquitinated by NOSIP.

It localises to the cytoplasm. Its subcellular location is the nucleus. The protein localises to the chromosome. It is found in the centromere. The protein resides in the cytoskeleton. It localises to the spindle pole. The enzyme catalyses O-phospho-L-seryl-[protein] + H2O = L-seryl-[protein] + phosphate. The catalysed reaction is O-phospho-L-threonyl-[protein] + H2O = L-threonyl-[protein] + phosphate. Functionally, catalytic subunit of protein phosphatase 2A (PP2A), a serine/threonine phosphatase involved in the regulation of a wide variety of enzymes, signal transduction pathways, and cellular events. PP2A can modulate the activity of phosphorylase B kinase, casein kinase 2, mitogen-stimulated S6 kinase, and MAP-2 kinase. Part of the striatin-interacting phosphatase and kinase (STRIPAK) complexes. STRIPAK complexes have critical roles in protein (de)phosphorylation and are regulators of multiple signaling pathways including Hippo, MAPK, nuclear receptor and cytoskeleton remodeling. Different types of STRIPAK complexes are involved in a variety of biological processes such as cell growth, differentiation, apoptosis, metabolism and immune regulation. The sequence is that of Serine/threonine-protein phosphatase 2A catalytic subunit beta isoform (PPP2CB) from Oryctolagus cuniculus (Rabbit).